A 101-amino-acid polypeptide reads, in one-letter code: uncharacterized protein (101 aa).

Residues 58 to 80 (VFPSLNIIILMSDALMFFLRSSI) form a helical membrane-spanning segment.

Its subcellular location is the membrane. This is an uncharacterized protein from Saccharomyces cerevisiae (strain ATCC 204508 / S288c) (Baker's yeast).